A 296-amino-acid chain; its full sequence is Phosphoribosylaminoimidazole-succinocarboxamide synthase (296 aa).

It belongs to the SAICAR synthetase family.

It catalyses the reaction 5-amino-1-(5-phospho-D-ribosyl)imidazole-4-carboxylate + L-aspartate + ATP = (2S)-2-[5-amino-1-(5-phospho-beta-D-ribosyl)imidazole-4-carboxamido]succinate + ADP + phosphate + 2 H(+). Its pathway is purine metabolism; IMP biosynthesis via de novo pathway; 5-amino-1-(5-phospho-D-ribosyl)imidazole-4-carboxamide from 5-amino-1-(5-phospho-D-ribosyl)imidazole-4-carboxylate: step 1/2. This chain is Phosphoribosylaminoimidazole-succinocarboxamide synthase, found in Lachnospira eligens (strain ATCC 27750 / DSM 3376 / VPI C15-48 / C15-B4) (Eubacterium eligens).